A 57-amino-acid polypeptide reads, in one-letter code: uncharacterized protein (57 aa).

This is an uncharacterized protein from His1 virus (isolate Australia/Victoria) (His1V).